A 456-amino-acid chain; its full sequence is Ribosomal RNA small subunit methyltransferase F (456 aa).

Residues 109–115 (AAAPGGK), E133, R138, and D177 each bind S-adenosyl-L-methionine. The Nucleophile role is filled by C230.

The protein belongs to the class I-like SAM-binding methyltransferase superfamily. RsmB/NOP family.

The protein localises to the cytoplasm. The catalysed reaction is cytidine(1400) in 16S rRNA + S-adenosyl-L-methionine = 5-methylcytidine(1400) in 16S rRNA + S-adenosyl-L-homocysteine + H(+). It carries out the reaction cytidine(1404) in 16S rRNA + S-adenosyl-L-methionine = 5-methylcytidine(1404) in 16S rRNA + S-adenosyl-L-homocysteine + H(+). The enzyme catalyses cytidine(1407) in 16S rRNA + S-adenosyl-L-methionine = 5-methylcytidine(1407) in 16S rRNA + S-adenosyl-L-homocysteine + H(+). Its function is as follows. Specifically methylates the cytosines at positions 1400 (m5C1400), 1404 (m5C1404) and 1407 (m5C1407) of 16S rRNA. C1400, C1404 and C1407 are methylated in a 30S subunit substrate, but only C1400 and C1404 are methylated when naked 16S rRNA is the substrate. Methylation by RsmF may facilitate growth at temperatures outside the optimal growth temperature. This chain is Ribosomal RNA small subunit methyltransferase F, found in Thermus thermophilus (strain ATCC 27634 / DSM 579 / HB8).